The primary structure comprises 369 residues: tRNA-specific 2-thiouridylase MnmA (369 aa).

Residues 11–18 (GMSGGVDS) and methionine 37 contribute to the ATP site. An interaction with target base in tRNA region spans residues 97–99 (NPD). Cysteine 102 functions as the Nucleophile in the catalytic mechanism. A disulfide bridge links cysteine 102 with cysteine 199. Glycine 127 is an ATP binding site. Residues 149 to 151 (KDQ) are interaction with tRNA. Catalysis depends on cysteine 199, which acts as the Cysteine persulfide intermediate. Residues 311–312 (RY) form an interaction with tRNA region.

The protein belongs to the MnmA/TRMU family. In terms of assembly, interacts with TusE.

Its subcellular location is the cytoplasm. It carries out the reaction S-sulfanyl-L-cysteinyl-[protein] + uridine(34) in tRNA + AH2 + ATP = 2-thiouridine(34) in tRNA + L-cysteinyl-[protein] + A + AMP + diphosphate + H(+). Its function is as follows. Catalyzes the 2-thiolation of uridine at the wobble position (U34) of tRNA(Lys), tRNA(Glu) and tRNA(Gln), leading to the formation of s(2)U34, the first step of tRNA-mnm(5)s(2)U34 synthesis. Sulfur is provided by IscS, via a sulfur-relay system. Binds ATP and its substrate tRNAs. This chain is tRNA-specific 2-thiouridylase MnmA, found in Enterobacter sp. (strain 638).